The chain runs to 618 residues: Dihydroxy-acid dehydratase (618 aa).

A Mg(2+)-binding site is contributed by D81. A [2Fe-2S] cluster-binding site is contributed by C122. D123 and K124 together coordinate Mg(2+). Residue K124 is modified to N6-carboxylysine. C195 contacts [2Fe-2S] cluster. E493 serves as a coordination point for Mg(2+). The active-site Proton acceptor is the S519.

The protein belongs to the IlvD/Edd family. In terms of assembly, homodimer. Requires [2Fe-2S] cluster as cofactor. Mg(2+) serves as cofactor.

The enzyme catalyses (2R)-2,3-dihydroxy-3-methylbutanoate = 3-methyl-2-oxobutanoate + H2O. It catalyses the reaction (2R,3R)-2,3-dihydroxy-3-methylpentanoate = (S)-3-methyl-2-oxopentanoate + H2O. It participates in amino-acid biosynthesis; L-isoleucine biosynthesis; L-isoleucine from 2-oxobutanoate: step 3/4. It functions in the pathway amino-acid biosynthesis; L-valine biosynthesis; L-valine from pyruvate: step 3/4. Functions in the biosynthesis of branched-chain amino acids. Catalyzes the dehydration of (2R,3R)-2,3-dihydroxy-3-methylpentanoate (2,3-dihydroxy-3-methylvalerate) into 2-oxo-3-methylpentanoate (2-oxo-3-methylvalerate) and of (2R)-2,3-dihydroxy-3-methylbutanoate (2,3-dihydroxyisovalerate) into 2-oxo-3-methylbutanoate (2-oxoisovalerate), the penultimate precursor to L-isoleucine and L-valine, respectively. The polypeptide is Dihydroxy-acid dehydratase (Shewanella amazonensis (strain ATCC BAA-1098 / SB2B)).